A 262-amino-acid polypeptide reads, in one-letter code: Global transcriptional regulator CodY (262 aa).

The segment at 1 to 159 (MAHLLEKTRK…ASTVVGIQLL (159 aa)) is GAF domain. A DNA-binding region (H-T-H motif) is located at residues 207-226 (ASVIADRIGITRSVIVNALR).

Belongs to the CodY family.

It localises to the cytoplasm. DNA-binding global transcriptional regulator which is involved in the adaptive response to starvation and acts by directly or indirectly controlling the expression of numerous genes in response to nutrient availability. During rapid exponential growth, CodY is highly active and represses genes whose products allow adaptation to nutrient depletion. This is Global transcriptional regulator CodY from Streptococcus pneumoniae (strain JJA).